The chain runs to 122 residues: Large ribosomal subunit protein uL18 (122 aa).

Over residues 1-19 (MSTLSRKQKTQKRHKRLRR) the composition is skewed to basic residues. Residues 1–26 (MSTLSRKQKTQKRHKRLRRNLSGTDQ) form a disordered region.

This sequence belongs to the universal ribosomal protein uL18 family. Part of the 50S ribosomal subunit; part of the 5S rRNA/L5/L18/L25 subcomplex. Contacts the 5S and 23S rRNAs.

Its function is as follows. This is one of the proteins that bind and probably mediate the attachment of the 5S RNA into the large ribosomal subunit, where it forms part of the central protuberance. The protein is Large ribosomal subunit protein uL18 of Prochlorococcus marinus (strain SARG / CCMP1375 / SS120).